A 107-amino-acid chain; its full sequence is Ig kappa chain V-VI region NQ2-48.2.2 (107 aa).

The tract at residues 1-23 is framework-1; the sequence is QILLTQSPAIMSASPGQKVTMTC. A disulfide bridge links C23 with C87. Residues 24-33 are complementarity-determining-1; that stretch reads SASSSVSYMH. The interval 34–48 is framework-2; it reads WYQQKSGTSPKRWIY. Residues 49–55 are complementarity-determining-2; sequence DTSKLAS. The framework-3 stretch occupies residues 56–87; the sequence is GVPARFSGSGSATSYSLTITSMQAEDAATYYC. The tract at residues 88–96 is complementarity-determining-3; the sequence is QQWSSNPLT. Residues 97 to 106 are framework-4; sequence FGAGTKLXLK.

Its function is as follows. Anti-2-phenyl oxazolone (PHOX) Antibody. This is Ig kappa chain V-VI region NQ2-48.2.2 from Mus musculus (Mouse).